A 197-amino-acid polypeptide reads, in one-letter code: dITP/XTP pyrophosphatase (197 aa).

8 to 13 (TGNVGK) contacts substrate. Glu40 and Asp69 together coordinate Mg(2+). Asp69 serves as the catalytic Proton acceptor. Substrate-binding positions include Ser70, 154–157 (FGYD), Lys177, and 182–183 (HR).

It belongs to the HAM1 NTPase family. As to quaternary structure, homodimer. Mg(2+) is required as a cofactor. The cofactor is Mn(2+). It depends on Ni(2+) as a cofactor.

It catalyses the reaction XTP + H2O = XMP + diphosphate + H(+). The catalysed reaction is dITP + H2O = dIMP + diphosphate + H(+). It carries out the reaction ITP + H2O = IMP + diphosphate + H(+). Its function is as follows. Pyrophosphatase that catalyzes the hydrolysis of nucleoside triphosphates to their monophosphate derivatives, with a high preference for the non-canonical purine nucleotides XTP (xanthosine triphosphate), dITP (deoxyinosine triphosphate) and ITP. Can also efficiently hydrolyze 2'-deoxy-N-6-hydroxylaminopurine triphosphate (dHAPTP). Seems to function as a house-cleaning enzyme that removes non-canonical purine nucleotides from the nucleotide pool, thus preventing their incorporation into DNA/RNA and avoiding chromosomal lesions. To a much lesser extent, is also able to hydrolyze GTP, dGTP and dUTP, but shows very low activity toward the canonical nucleotides dATP, dCTP and dTTP and toward 8-oxo-dGTP, purine deoxyribose triphosphate, 2-aminopurine deoxyribose triphosphate and 2,6-diaminopurine deoxyribose triphosphate. In terms of biological role, genetic interactions among priB, dam, lexA, nagC, polA, rdgB, rdgB, rep and uup link the PriA-PriB replication restart pathway to DNA double-strand break repair. The polypeptide is dITP/XTP pyrophosphatase (Escherichia coli (strain K12)).